Here is a 367-residue protein sequence, read N- to C-terminus: tRNA-specific 2-thiouridylase MnmA (367 aa).

ATP-binding positions include 11-18 (GLSGGVDS) and Leu-37. The active-site Nucleophile is the Cys-99. Cysteines 99 and 195 form a disulfide. Position 123 (Gly-123) interacts with ATP. The tract at residues 145 to 147 (KDQ) is interaction with tRNA. The active-site Cysteine persulfide intermediate is the Cys-195. The segment at 304–305 (RY) is interaction with tRNA.

The protein belongs to the MnmA/TRMU family.

It localises to the cytoplasm. It catalyses the reaction S-sulfanyl-L-cysteinyl-[protein] + uridine(34) in tRNA + AH2 + ATP = 2-thiouridine(34) in tRNA + L-cysteinyl-[protein] + A + AMP + diphosphate + H(+). In terms of biological role, catalyzes the 2-thiolation of uridine at the wobble position (U34) of tRNA, leading to the formation of s(2)U34. The polypeptide is tRNA-specific 2-thiouridylase MnmA (Chlorobium luteolum (strain DSM 273 / BCRC 81028 / 2530) (Pelodictyon luteolum)).